Reading from the N-terminus, the 279-residue chain is Probable endonuclease 4 (279 aa).

Positions 74, 112, 147, 180, 183, 214, 227, 229, and 259 each coordinate Zn(2+).

The protein belongs to the AP endonuclease 2 family. It depends on Zn(2+) as a cofactor.

It catalyses the reaction Endonucleolytic cleavage to 5'-phosphooligonucleotide end-products.. Functionally, endonuclease IV plays a role in DNA repair. It cleaves phosphodiester bonds at apurinic or apyrimidinic (AP) sites, generating a 3'-hydroxyl group and a 5'-terminal sugar phosphate. This Mycoplasma mobile (strain ATCC 43663 / 163K / NCTC 11711) (Mesomycoplasma mobile) protein is Probable endonuclease 4.